Reading from the N-terminus, the 123-residue chain is WAP four-disulfide core domain protein 5 (123 aa).

An N-terminal signal peptide occupies residues 1–24; that stretch reads MRIQSLLLLGALLAVGSQLPAVFG. WAP domains are found at residues 27-73 and 74-121; these read KGEK…CVPR and VSVK…RDPA. 8 cysteine pairs are disulfide-bonded: cysteine 34–cysteine 62, cysteine 41–cysteine 66, cysteine 49–cysteine 61, cysteine 55–cysteine 70, cysteine 81–cysteine 109, cysteine 88–cysteine 113, cysteine 96–cysteine 108, and cysteine 102–cysteine 117.

The protein resides in the secreted. In terms of biological role, putative acid-stable proteinase inhibitor. The chain is WAP four-disulfide core domain protein 5 (WFDC5) from Pongo abelii (Sumatran orangutan).